A 323-amino-acid polypeptide reads, in one-letter code: MTNFKWIVAAAGLLSGQVLAAPTATSTHAKRATVSDAAFGYASLNGGTTGGAGGTTTTVSSYAAFTSAVSGDDAKVVYVDGTIKQTADQVKIGSNTSIIGKDANAILEGFGVLVKEKENVIIRNLGVSKVLADNGDAIGVQYSNNVWIDHCDVSSDRDHDKDYYDGLIDITHGSDYVTVSNTFIHDHWKASLVGHSDSNEDEDSGHLTVTYANNYWYNINSRAPSFRFGTGHVYNSYYLDVSDGINTRDGAQLLVESNQFVDSKKALYSTDDGYAVSNDNDFGDSENTAEEGTLTSMPYDYTLLGSANVKAAVVGTAGQTLTF.

Residues 1-20 (MTNFKWIVAAAGLLSGQVLA) form the signal peptide. The N-linked (GlcNAc...) asparagine glycan is linked to N95. Ca(2+)-binding residues include D136, D165, and D169. R222 is a catalytic residue.

It belongs to the polysaccharide lyase 1 family. The cofactor is Ca(2+).

The protein localises to the secreted. It catalyses the reaction Eliminative cleavage of (1-&gt;4)-alpha-D-galacturonan to give oligosaccharides with 4-deoxy-alpha-D-galact-4-enuronosyl groups at their non-reducing ends.. Pectinolytic enzyme consist of four classes of enzymes: pectin lyase, polygalacturonase, pectin methylesterase and rhamnogalacturonase. Among pectinolytic enzymes, pectin lyase is the most important in depolymerization of pectin, since it cleaves internal glycosidic bonds of highly methylated pectins. Favors pectate, the anion, over pectin, the methyl ester. The polypeptide is Probable pectate lyase A (plyA) (Aspergillus niger (strain ATCC MYA-4892 / CBS 513.88 / FGSC A1513)).